The primary structure comprises 94 residues: CRISPR-associated endoribonuclease Cas2 1 (94 aa).

D8 is a binding site for Mg(2+).

It belongs to the CRISPR-associated endoribonuclease Cas2 protein family. As to quaternary structure, homodimer, forms a heterotetramer with a Cas1 homodimer. Mg(2+) is required as a cofactor.

Its function is as follows. CRISPR (clustered regularly interspaced short palindromic repeat), is an adaptive immune system that provides protection against mobile genetic elements (viruses, transposable elements and conjugative plasmids). CRISPR clusters contain sequences complementary to antecedent mobile elements and target invading nucleic acids. CRISPR clusters are transcribed and processed into CRISPR RNA (crRNA). Functions as a ssRNA-specific endoribonuclease. Involved in the integration of spacer DNA into the CRISPR cassette. In Synechocystis sp. (strain ATCC 27184 / PCC 6803 / Kazusa), this protein is CRISPR-associated endoribonuclease Cas2 1.